A 324-amino-acid chain; its full sequence is Protein translocase subunit SecF (324 aa).

6 helical membrane-spanning segments follow: residues 16–36, 145–165, 174–194, 201–221, 247–269, and 276–295; these read FFWA…ASLV, LIRS…VYIW, LGSV…FALF, TTVA…VVVF, TLSR…LVFG, and FVFA…VYMA.

The protein belongs to the SecD/SecF family. SecF subfamily. Forms a complex with SecD. Part of the essential Sec protein translocation apparatus which comprises SecA, SecYEG and auxiliary proteins SecDF-YajC and YidC.

Its subcellular location is the cell inner membrane. Its function is as follows. Part of the Sec protein translocase complex. Interacts with the SecYEG preprotein conducting channel. SecDF uses the proton motive force (PMF) to complete protein translocation after the ATP-dependent function of SecA. This is Protein translocase subunit SecF from Cereibacter sphaeroides (strain ATCC 17023 / DSM 158 / JCM 6121 / CCUG 31486 / LMG 2827 / NBRC 12203 / NCIMB 8253 / ATH 2.4.1.) (Rhodobacter sphaeroides).